Reading from the N-terminus, the 111-residue chain is Protein YibV (111 aa).

The sequence is that of Protein YibV (yibV) from Escherichia coli O157:H7.